A 167-amino-acid chain; its full sequence is Endoribonuclease YbeY (167 aa).

3 residues coordinate Zn(2+): His-131, His-135, and His-141.

The protein belongs to the endoribonuclease YbeY family. Requires Zn(2+) as cofactor.

The protein localises to the cytoplasm. Functionally, single strand-specific metallo-endoribonuclease involved in late-stage 70S ribosome quality control and in maturation of the 3' terminus of the 16S rRNA. The chain is Endoribonuclease YbeY from Rickettsia prowazekii (strain Madrid E).